Consider the following 331-residue polypeptide: Lipoyl synthase (331 aa).

The segment at 1 to 33 is disordered; it reads MSDALIASSSEAPQSPAEQYDPTRKQKSADKTA. Low complexity predominate over residues 7 to 19; it reads ASSSEAPQSPAEQ. Residues 21-33 are compositionally biased toward basic and acidic residues; sequence DPTRKQKSADKTA. Residues Cys-78, Cys-83, Cys-89, Cys-104, Cys-108, Cys-111, and Ser-318 each contribute to the [4Fe-4S] cluster site. In terms of domain architecture, Radical SAM core spans 89–307; that stretch reads CFGKGTATFM…EEEAYKMGFT (219 aa).

The protein belongs to the radical SAM superfamily. Lipoyl synthase family. Requires [4Fe-4S] cluster as cofactor.

The protein resides in the cytoplasm. It carries out the reaction [[Fe-S] cluster scaffold protein carrying a second [4Fe-4S](2+) cluster] + N(6)-octanoyl-L-lysyl-[protein] + 2 oxidized [2Fe-2S]-[ferredoxin] + 2 S-adenosyl-L-methionine + 4 H(+) = [[Fe-S] cluster scaffold protein] + N(6)-[(R)-dihydrolipoyl]-L-lysyl-[protein] + 4 Fe(3+) + 2 hydrogen sulfide + 2 5'-deoxyadenosine + 2 L-methionine + 2 reduced [2Fe-2S]-[ferredoxin]. The protein operates within protein modification; protein lipoylation via endogenous pathway; protein N(6)-(lipoyl)lysine from octanoyl-[acyl-carrier-protein]: step 2/2. Catalyzes the radical-mediated insertion of two sulfur atoms into the C-6 and C-8 positions of the octanoyl moiety bound to the lipoyl domains of lipoate-dependent enzymes, thereby converting the octanoylated domains into lipoylated derivatives. The sequence is that of Lipoyl synthase from Cupriavidus pinatubonensis (strain JMP 134 / LMG 1197) (Cupriavidus necator (strain JMP 134)).